Reading from the N-terminus, the 217-residue chain is ATP phosphoribosyltransferase (217 aa).

The protein belongs to the ATP phosphoribosyltransferase family. Short subfamily. Heteromultimer composed of HisG and HisZ subunits.

Its subcellular location is the cytoplasm. The enzyme catalyses 1-(5-phospho-beta-D-ribosyl)-ATP + diphosphate = 5-phospho-alpha-D-ribose 1-diphosphate + ATP. It participates in amino-acid biosynthesis; L-histidine biosynthesis; L-histidine from 5-phospho-alpha-D-ribose 1-diphosphate: step 1/9. In terms of biological role, catalyzes the condensation of ATP and 5-phosphoribose 1-diphosphate to form N'-(5'-phosphoribosyl)-ATP (PR-ATP). Has a crucial role in the pathway because the rate of histidine biosynthesis seems to be controlled primarily by regulation of HisG enzymatic activity. This is ATP phosphoribosyltransferase from Burkholderia orbicola (strain AU 1054).